A 569-amino-acid polypeptide reads, in one-letter code: Urease subunit beta (569 aa).

The 439-residue stretch at 131-569 (GGIDTHIHFI…VSLAQLFSIF (439 aa)) folds into the Urease domain. Ni(2+) is bound by residues His-136, His-138, and Lys-219. Lys-219 is subject to N6-carboxylysine. His-221 lines the substrate pocket. Ni(2+)-binding residues include His-248 and His-274. The active-site Proton donor is the His-322. Asp-362 provides a ligand contact to Ni(2+).

The protein belongs to the metallo-dependent hydrolases superfamily. Urease alpha subunit family. As to quaternary structure, heterohexamer of 3 UreA (alpha) and 3 UreB (beta) subunits. Four heterohexamers assemble to form a 16 nm dodecameric complex. It depends on Ni cation as a cofactor. Carboxylation allows a single lysine to coordinate two nickel ions.

The protein localises to the cytoplasm. It carries out the reaction urea + 2 H2O + H(+) = hydrogencarbonate + 2 NH4(+). It functions in the pathway nitrogen metabolism; urea degradation; CO(2) and NH(3) from urea (urease route): step 1/1. Functionally, ammonia produced by ureolysis increases the gastric pH thereby providing an environment permissive for colonization of the stomach. The polypeptide is Urease subunit beta (Helicobacter pylori (strain J99 / ATCC 700824) (Campylobacter pylori J99)).